Reading from the N-terminus, the 457-residue chain is MATGKIVQIIGAVIDVEFPQDAVPKVYDALKVESGLTLEVQQQLGGGLVRCIALGTSDGLKRGLKVENTGNPIQVPVGTKTLGRIMNVLGEPIDEKGPIGEEARWDIHRAAPSYEEQSNSTELLETGIKVIDLICPFAKGGKVGLFGGAGVGKTVNMMELIRNIAIEHSGYSVFAGVGERTREGNDFYHEMTDSNVLDKVSLVYGQMNEPPGNRLRVALTGLTMAEKFRDEGRDVLFFVDNIYRYTLAGTEVSALLGRMPSAVGYQPTLAEEMGVLQERITSTKTGSITSVQAVYVPADDLTDPSPATTFAHLDSTVVLSRNIASLGIYPAVDPLDSTSRQLDPLVVGEEHYNVARGVQGTLQRYKELKDIIAILGMDELSEDDKLVVSRARKIERFLSQPFFVAEVFTGSPGKYVSLKDTIRGFKGILEGEFDHIPEQAFYMAGSIDEVVERASKM.

147–154 (GGAGVGKT) provides a ligand contact to ATP.

This sequence belongs to the ATPase alpha/beta chains family. In terms of assembly, F-type ATPases have 2 components, CF(1) - the catalytic core - and CF(0) - the membrane proton channel. CF(1) has five subunits: alpha(3), beta(3), gamma(1), delta(1), epsilon(1). CF(0) has three main subunits: a(1), b(2) and c(9-12). The alpha and beta chains form an alternating ring which encloses part of the gamma chain. CF(1) is attached to CF(0) by a central stalk formed by the gamma and epsilon chains, while a peripheral stalk is formed by the delta and b chains.

The protein localises to the cell inner membrane. The catalysed reaction is ATP + H2O + 4 H(+)(in) = ADP + phosphate + 5 H(+)(out). In terms of biological role, produces ATP from ADP in the presence of a proton gradient across the membrane. The catalytic sites are hosted primarily by the beta subunits. The sequence is that of ATP synthase subunit beta from Haemophilus ducreyi (strain 35000HP / ATCC 700724).